We begin with the raw amino-acid sequence, 238 residues long: tRNA (guanine-N(7)-)-methyltransferase (238 aa).

Residues Glu68, Glu93, Asp120, and Asp143 each contribute to the S-adenosyl-L-methionine site. Residue Asp143 is part of the active site. Residues Lys147, Asp179, and 216-219 (TKFE) each bind substrate.

Belongs to the class I-like SAM-binding methyltransferase superfamily. TrmB family.

It carries out the reaction guanosine(46) in tRNA + S-adenosyl-L-methionine = N(7)-methylguanosine(46) in tRNA + S-adenosyl-L-homocysteine. It functions in the pathway tRNA modification; N(7)-methylguanine-tRNA biosynthesis. Catalyzes the formation of N(7)-methylguanine at position 46 (m7G46) in tRNA. The sequence is that of tRNA (guanine-N(7)-)-methyltransferase from Shewanella sp. (strain MR-4).